The following is a 118-amino-acid chain: Small ribosomal subunit protein uS13 (118 aa).

A disordered region spans residues 94–118 (SLPLRGQRTKTNARTRKGPRKPIRK).

It belongs to the universal ribosomal protein uS13 family. Part of the 30S ribosomal subunit. Forms a loose heterodimer with protein S19. Forms two bridges to the 50S subunit in the 70S ribosome.

Its function is as follows. Located at the top of the head of the 30S subunit, it contacts several helices of the 16S rRNA. In the 70S ribosome it contacts the 23S rRNA (bridge B1a) and protein L5 of the 50S subunit (bridge B1b), connecting the 2 subunits; these bridges are implicated in subunit movement. Contacts the tRNAs in the A and P-sites. In Shewanella frigidimarina (strain NCIMB 400), this protein is Small ribosomal subunit protein uS13.